Here is a 352-residue protein sequence, read N- to C-terminus: MMYYLYSHAGINIFQYITFRAGAAFFIAFFLALLFMPRFIQWARNQKAAQPISEFAPQGHRGKANTPTMGGLVFIGATLLASLLCAKLNNLYVLAGLAVILLFGLIGLRDDAVKVLNHSNAGLSSRVKMLYLVLAGASVSAALFYFGMEDDLYIPFNKNPLLSMGIVAILFWTLVMVATSNAVNITDGLDGLATVPSVYALVSLSVFVYIAGHAGLSSYLLWPKITDSGEAVIVSAALVGALIGFLWFNCHPAQLFMGDSGSLSIGGFIAYMAIISKNEFLLFLIGSIFVIETVSVILQIGSYKTRGKRIFLMAPIHHHFEVKGWAETKIIVRFWIIALMSNIIALLTLKVR.

10 consecutive transmembrane segments (helical) span residues 16–36 (YITF…LLFM), 66–86 (TPTM…LLCA), 88–108 (LNNL…LIGL), 129–149 (MLYL…FGME), 160–180 (PLLS…VATS), 191–211 (GLAT…VYIA), 228–248 (SGEA…FLWF), 255–275 (LFMG…MAII), 280–300 (FLLF…ILQI), and 329–349 (KIIV…LLTL).

The protein belongs to the glycosyltransferase 4 family. MraY subfamily. It depends on Mg(2+) as a cofactor.

It localises to the cell inner membrane. The catalysed reaction is UDP-N-acetyl-alpha-D-muramoyl-L-alanyl-gamma-D-glutamyl-meso-2,6-diaminopimeloyl-D-alanyl-D-alanine + di-trans,octa-cis-undecaprenyl phosphate = di-trans,octa-cis-undecaprenyl diphospho-N-acetyl-alpha-D-muramoyl-L-alanyl-D-glutamyl-meso-2,6-diaminopimeloyl-D-alanyl-D-alanine + UMP. Its pathway is cell wall biogenesis; peptidoglycan biosynthesis. Its function is as follows. Catalyzes the initial step of the lipid cycle reactions in the biosynthesis of the cell wall peptidoglycan: transfers peptidoglycan precursor phospho-MurNAc-pentapeptide from UDP-MurNAc-pentapeptide onto the lipid carrier undecaprenyl phosphate, yielding undecaprenyl-pyrophosphoryl-MurNAc-pentapeptide, known as lipid I. The sequence is that of Phospho-N-acetylmuramoyl-pentapeptide-transferase from Wolinella succinogenes (strain ATCC 29543 / DSM 1740 / CCUG 13145 / JCM 31913 / LMG 7466 / NCTC 11488 / FDC 602W) (Vibrio succinogenes).